The sequence spans 642 residues: Threonine--tRNA ligase (642 aa).

The TGS domain maps to 1–61 (MPVITITNGL…MQDSKLDIIT (61 aa)). Residues 243 to 534 (DHRKIGQQLD…LIEEYAGFFP (292 aa)) are catalytic. The Zn(2+) site is built by Cys334, His385, and His511.

The protein belongs to the class-II aminoacyl-tRNA synthetase family. As to quaternary structure, homodimer. Zn(2+) serves as cofactor.

The protein localises to the cytoplasm. It catalyses the reaction tRNA(Thr) + L-threonine + ATP = L-threonyl-tRNA(Thr) + AMP + diphosphate + H(+). In terms of biological role, catalyzes the attachment of threonine to tRNA(Thr) in a two-step reaction: L-threonine is first activated by ATP to form Thr-AMP and then transferred to the acceptor end of tRNA(Thr). Also edits incorrectly charged L-seryl-tRNA(Thr). This is Threonine--tRNA ligase from Baumannia cicadellinicola subsp. Homalodisca coagulata.